Here is a 422-residue protein sequence, read N- to C-terminus: Histidine--tRNA ligase (422 aa).

This sequence belongs to the class-II aminoacyl-tRNA synthetase family. As to quaternary structure, homodimer.

It is found in the cytoplasm. The enzyme catalyses tRNA(His) + L-histidine + ATP = L-histidyl-tRNA(His) + AMP + diphosphate + H(+). This chain is Histidine--tRNA ligase, found in Vesicomyosocius okutanii subsp. Calyptogena okutanii (strain HA).